The chain runs to 130 residues: MVSFITSRQLKGLIENQRKDFQVVDLRREDFARDHITNAWHVPVTAQITEKQLNQLIKGLSDTFSSSQFVKVIFHCTGSKNRGPKVAAKFETYLQEEDITSKFESCILVGGFYAWETHCRESNLKLIVSG.

Positions 17–124 (QRKDFQVVDL…WETHCRESNL (108 aa)) constitute a Rhodanese domain.

Its function is as follows. Involved in resistance to arsenic compounds. This Saccharomyces cerevisiae (strain ATCC 204508 / S288c) (Baker's yeast) protein is Arsenical-resistance protein 2 (ARR2).